Here is a 382-residue protein sequence, read N- to C-terminus: Glutamyl-tRNA reductase (382 aa).

Substrate-binding positions include 38–41 (TCNR), S85, 90–92 (ENQ), and Q96. C39 acts as the Nucleophile in catalysis. Position 164-169 (164-169 (GAGEIG)) interacts with NADP(+).

It belongs to the glutamyl-tRNA reductase family. Homodimer.

The catalysed reaction is (S)-4-amino-5-oxopentanoate + tRNA(Glu) + NADP(+) = L-glutamyl-tRNA(Glu) + NADPH + H(+). Its pathway is porphyrin-containing compound metabolism; protoporphyrin-IX biosynthesis; 5-aminolevulinate from L-glutamyl-tRNA(Glu): step 1/2. In terms of biological role, catalyzes the NADPH-dependent reduction of glutamyl-tRNA(Glu) to glutamate 1-semialdehyde (GSA). The protein is Glutamyl-tRNA reductase of Methanococcus maripaludis (strain C7 / ATCC BAA-1331).